The chain runs to 358 residues: Alternative oxidase, mitochondrial (358 aa).

Residues 152–172 (LIRYVFLESVAGVPGMVAGML) form a helical membrane-spanning segment. Glu159, Glu198, and His201 together coordinate Fe cation. A helical membrane pass occupies residues 218-238 (MILGAQGVFFNSFFLCYLFSP). The Fe cation site is built by Glu249, Glu306, and His309.

This sequence belongs to the alternative oxidase family. It depends on Fe cation as a cofactor.

The protein localises to the mitochondrion inner membrane. Catalyzes cyanide-resistant oxygen consumption. May increase respiration when the cytochrome respiratory pathway is restricted, or in response to low temperatures. The polypeptide is Alternative oxidase, mitochondrial (AOX1) (Monilinia fructicola (Brown rot fungus)).